Here is a 262-residue protein sequence, read N- to C-terminus: Light-harvesting complex-like protein 3 isotype 1, chloroplastic (262 aa).

Residues 1-39 constitute a chloroplast transit peptide; it reads MALFSPPISSSSLQNPNFIPKFSFSLLSSNRFSLLSVTR. The next 2 helical transmembrane spans lie at 180 to 200 and 202 to 222; these read AAMI…VGLV and QMGN…VLFI.

Interacts with GGR. Forms homodimer, and heterodimer with LIL3.2. As to expression, expressed in photosynthetically active tissues (at protein level).

The protein resides in the plastid. It is found in the chloroplast thylakoid membrane. In terms of biological role, light-harvesting-like protein required for biosynthesis of phytylated chlorophylls and alpha-tocopherol in green seedlings. Functions by anchoring geranylgeranyl reductase (GGR) in the thylakoid membrane, leading to the stabilization of GGR activity. Binds chlorophyll a in the thylakoid membrane. Plays a role in the regulation of chlorophyll biosynthesis under light stress and under standard growth conditions. The chain is Light-harvesting complex-like protein 3 isotype 1, chloroplastic (LIL3.1) from Arabidopsis thaliana (Mouse-ear cress).